A 277-amino-acid polypeptide reads, in one-letter code: Large ribosomal subunit protein uL2m (277 aa).

The tract at residues 225–263 (AMNPVDHPHGGGEGKTSGGRPSVTPWSWPTKGQPTRSKR) is disordered. The segment covering 248 to 259 (TPWSWPTKGQPT) has biased composition (polar residues).

It belongs to the universal ribosomal protein uL2 family.

It localises to the mitochondrion. The sequence is that of Large ribosomal subunit protein uL2m (RPL2) from Reclinomonas americana.